Here is a 206-residue protein sequence, read N- to C-terminus: Large ribosomal subunit protein uL4 (206 aa).

The interval G46–T77 is disordered. Over residues H58–G70 the composition is skewed to basic residues.

This sequence belongs to the universal ribosomal protein uL4 family. In terms of assembly, part of the 50S ribosomal subunit.

One of the primary rRNA binding proteins, this protein initially binds near the 5'-end of the 23S rRNA. It is important during the early stages of 50S assembly. It makes multiple contacts with different domains of the 23S rRNA in the assembled 50S subunit and ribosome. Its function is as follows. Forms part of the polypeptide exit tunnel. This chain is Large ribosomal subunit protein uL4, found in Polaromonas sp. (strain JS666 / ATCC BAA-500).